The primary structure comprises 287 residues: MGSLKEIKVRIASIRSTQKITAAMKMVSSAKFHHAQTQTEHTLTYANKLSAILNGLLSAECDLDSPYTEQRKVSKVAIAVFASSTGLCGTFNANIWKELSATIQTYKNQQIEVGLYPIGKKIADELHKAGYSFDTDFVTIGEKPSYESAVSLANRLMELFVTGKADRVELLYHHFKNMATQVVTHKTYLPLSLSDTEAAETATDYILEPSAEELRNRLFPKLLNLTIYTILLDTSTAEHAARMMAMQTANDNANDLIQQLTLQYNKTRQQAITNELLDIMGGAAVSS.

It belongs to the ATPase gamma chain family. In terms of assembly, F-type ATPases have 2 components, CF(1) - the catalytic core - and CF(0) - the membrane proton channel. CF(1) has five subunits: alpha(3), beta(3), gamma(1), delta(1), epsilon(1). CF(0) has three main subunits: a, b and c.

It is found in the cell inner membrane. In terms of biological role, produces ATP from ADP in the presence of a proton gradient across the membrane. The gamma chain is believed to be important in regulating ATPase activity and the flow of protons through the CF(0) complex. The protein is ATP synthase gamma chain of Parabacteroides distasonis (strain ATCC 8503 / DSM 20701 / CIP 104284 / JCM 5825 / NCTC 11152).